The following is a 313-amino-acid chain: Porphobilinogen deaminase (313 aa).

S-(dipyrrolylmethanemethyl)cysteine is present on Cys-242.

This sequence belongs to the HMBS family. Monomer. The cofactor is dipyrromethane.

It catalyses the reaction 4 porphobilinogen + H2O = hydroxymethylbilane + 4 NH4(+). The protein operates within porphyrin-containing compound metabolism; protoporphyrin-IX biosynthesis; coproporphyrinogen-III from 5-aminolevulinate: step 2/4. In terms of biological role, tetrapolymerization of the monopyrrole PBG into the hydroxymethylbilane pre-uroporphyrinogen in several discrete steps. The protein is Porphobilinogen deaminase of Salmonella arizonae (strain ATCC BAA-731 / CDC346-86 / RSK2980).